Consider the following 370-residue polypeptide: Ubiquinone biosynthesis O-methyltransferase, mitochondrial (370 aa).

The N-terminal 86 residues, 1-86 (MWRGGRLGSR…TYRTPWKRLY (86 aa)), are a transit peptide targeting the mitochondrion. R125 contributes to the S-adenosyl-L-methionine binding site. 2 positions are modified to N6-acetyllysine: K144 and K150. G155 and D176 together coordinate S-adenosyl-L-methionine. At K197 the chain carries N6-acetyllysine. S223 contacts S-adenosyl-L-methionine. Mg(2+) contacts are provided by E224, E227, and H228. The interval 336-370 (AQEHQEPAESALKGETGALHANTSGSPSVREEQRT) is disordered.

This sequence belongs to the class I-like SAM-binding methyltransferase superfamily. UbiG/COQ3 family. Component of a multi-subunit COQ enzyme complex, composed of at least COQ3, COQ4, COQ5, COQ6, COQ7 and COQ9. Mg(2+) is required as a cofactor.

It is found in the mitochondrion inner membrane. The enzyme catalyses 3,4-dihydroxy-5-(all-trans-decaprenyl)benzoate + S-adenosyl-L-methionine = 4-hydroxy-3-methoxy-5-(all-trans-decaprenyl)benzoate + S-adenosyl-L-homocysteine + H(+). The catalysed reaction is a 3-demethylubiquinone + S-adenosyl-L-methionine = a ubiquinone + S-adenosyl-L-homocysteine. It carries out the reaction 3-demethylubiquinol-10 + S-adenosyl-L-methionine = ubiquinol-10 + S-adenosyl-L-homocysteine + H(+). It functions in the pathway cofactor biosynthesis; ubiquinone biosynthesis. Functionally, O-methyltransferase required for two non-consecutive steps during ubiquinone biosynthesis. Catalyzes the 2 O-methylation of 3,4-dihydroxy-5-(all-trans-decaprenyl)benzoic acid into 4-hydroxy-3-methoxy-5-(all-trans-decaprenyl)benzoic acid. Also catalyzes the last step of ubiquinone biosynthesis by mediating methylation of 3-demethylubiquinone into ubiquinone. Also able to mediate the methylation of 3-demethylubiquinol-10 into ubiquinol-10. This is Ubiquinone biosynthesis O-methyltransferase, mitochondrial from Mus musculus (Mouse).